Consider the following 347-residue polypeptide: Oxygen sensor histidine kinase NreB (347 aa).

[4Fe-4S] cluster-binding residues include C59, C62, C74, and C77. Positions R153–D347 constitute a Histidine kinase domain. H159 bears the Phosphohistidine; by autocatalysis mark.

The cofactor is [4Fe-4S] cluster. Autophosphorylated.

It is found in the cytoplasm. The catalysed reaction is ATP + protein L-histidine = ADP + protein N-phospho-L-histidine.. With respect to regulation, activated by cysteine desulfurase, Fe(2+) ions and cysteine and inhibited by oxygen and ADP. Functionally, member of the two-component regulatory system NreB/NreC involved in the control of dissimilatory nitrate/nitrite reduction in response to oxygen. NreB functions as a direct oxygen sensor histidine kinase which is autophosphorylated, in the absence of oxygen, probably at the conserved histidine residue, and transfers its phosphate group probably to a conserved aspartate residue of NreC. NreB/NreC activates the expression of the nitrate (narGHJI) and nitrite (nir) reductase operons, as well as the putative nitrate transporter gene narT. This chain is Oxygen sensor histidine kinase NreB (nreB), found in Staphylococcus carnosus (strain TM300).